A 458-amino-acid chain; its full sequence is Photosystem II CP43 reaction center protein (458 aa).

A run of 5 helical transmembrane segments spans residues 54 to 78 (LFEVAHFTPEKPLYEQGDILLPHLA), 119 to 140 (LRGPETLEQYSDFFSQDWKDKN), 163 to 185 (KAMFFGGLYDPWVPGGGGVRVIT), 240 to 260 (RPFNWARRSLVWSGEAYLSYS), and 276 to 297 (WFNNTVYPSEFYGPTGSEASQA). Residue E352 coordinates [CaMn4O5] cluster. The chain crosses the membrane as a helical span at residues 432 to 456 (RARAAAAGFEKGIDRKTEPVLSMSD).

This sequence belongs to the PsbB/PsbC family. PsbC subfamily. In terms of assembly, PSII is composed of 1 copy each of membrane proteins PsbA, PsbB, PsbC, PsbD, PsbE, PsbF, PsbH, PsbI, PsbJ, PsbK, PsbL, PsbM, PsbT, PsbX, PsbY, PsbZ, Psb30/Ycf12, peripheral proteins PsbO, CyanoQ (PsbQ), PsbU, PsbV and a large number of cofactors. It forms dimeric complexes. Binds multiple chlorophylls and provides some of the ligands for the Ca-4Mn-5O cluster of the oxygen-evolving complex. It may also provide a ligand for a Cl- that is required for oxygen evolution. PSII binds additional chlorophylls, carotenoids and specific lipids. serves as cofactor.

The protein resides in the cellular thylakoid membrane. In terms of biological role, one of the components of the core complex of photosystem II (PSII). It binds chlorophyll and helps catalyze the primary light-induced photochemical processes of PSII. PSII is a light-driven water:plastoquinone oxidoreductase, using light energy to abstract electrons from H(2)O, generating O(2) and a proton gradient subsequently used for ATP formation. In Prochlorothrix hollandica, this protein is Photosystem II CP43 reaction center protein.